The chain runs to 807 residues: MRLSPVSLRLSRGPALLALALPLAAALAFSDETLDKVTKSEGYCSRILRAQGTRREGYTEFSLRVEGDPDFYKPGSSYRVTLSAAPPSYFRGFTLIALKENQEGDKEEDHAGTFQIIDEEETQFMSNCPVAVTESTPRRRTRIQVFWIAPPTGTGCVILKASIVQKRIIYFQDEGSLTKKLCEQDPTLDGVTDRPILDCCACGTAKYRLTFYGNWSEKTHPKDYPRRANHWSAIIGGSHSKNYVLWEYGGYASEGVKQVAELGSPVKMEEEIRQQSDEVLTVIKAKAQWPAWQPVNVRAAPSAEFSVDRTRHLMSFLTMMGPSPDWNVGLSAEDLCTKECGWVQKVVQDLIPWDAGTDSGVTYESPNKPTIPQEKIRPLTSLDHPQSPFYDPEGGSITQVARVVIERIARKGEQCNIVPDNVDDIVADLAPEEKDEDDTPETCIYSNWSPWSACSSSTCEKGKRMRQRMLKAQLDLSVPCPDTQDFQPCMGPGCSDEDGSTCTMSEWITWSPCSVSCGMGMRSRERYVKQFPEDGSVCMLPTEETEKCTVNEECSPSSCLVTEWGEWDDCSATCGMGMKKRHRMVKMSPADGSMCKAETSQAEKCMMPECHTIPCLLSPWSEWSDCSVTCGKGMRTRQRMLKSLAELGDCNEDLEQAEKCMLPECPIDCELSEWSQWSECNKSCGKGHMIRTRTIQMEPQFGGVPCPETVQRKKCRTRKCLRSPSVQKLRWREARESRRSEQLREESDGEQFPGCRMRPWTAWSECTKLCGGGIQERYMTVKKRFKSSQFTSCKDKKEIRACNVHPC.

An N-terminal signal peptide occupies residues 1-28 (MRLSPVSLRLSRGPALLALALPLAAALA). The 166-residue stretch at 29-194 (FSDETLDKVT…DPTLDGVTDR (166 aa)) folds into the Reelin domain. Disulfide bonds link Cys-44/Cys-128, Cys-156/Cys-182, Cys-199/Cys-336, Cys-200/Cys-340, Cys-202/Cys-415, Cys-443/Cys-480, Cys-454/Cys-489, Cys-459/Cys-494, Cys-502/Cys-538, Cys-513/Cys-517, Cys-548/Cys-554, Cys-559/Cys-595, Cys-570/Cys-574, Cys-605/Cys-610, Cys-615/Cys-650, Cys-626/Cys-630, and Cys-660/Cys-665. In terms of domain architecture, Spondin spans 195 to 388 (PILDCCACGT…LTSLDHPQSP (194 aa)). Asn-214 is a glycosylation site (N-linked (GlcNAc...) asparagine). 3 residues coordinate Ca(2+): Asp-325, Asp-354, and Asp-358. TSP type-1 domains lie at 442–495 (TCIY…PGCS), 501–555 (TCTM…EECS), 558–611 (SCLV…PECH), 614–666 (PCLL…PECP), and 668–721 (DCEL…RKCL). A glycan (N-linked (GlcNAc...) asparagine) is linked at Asn-681. Basic and acidic residues predominate over residues 732-746 (REARESRRSEQLREE). Positions 732-752 (REARESRRSEQLREESDGEQF) are disordered. One can recognise a TSP type-1 6 domain in the interval 754 to 806 (GCRMRPWTAWSECTKLCGGGIQERYMTVKKRFKSSQFTSCKDKKEIRACNVHP).

Binds to the central extracellular domain of APP and inhibits beta-secretase cleavage of APP.

It localises to the secreted. It is found in the extracellular space. Its subcellular location is the extracellular matrix. Functionally, cell adhesion protein that promotes the attachment of spinal cord and sensory neuron cells and the outgrowth of neurites in vitro. May contribute to the growth and guidance of axons in both the spinal cord and the PNS. The polypeptide is Spondin-1 (Spon1) (Mus musculus (Mouse)).